We begin with the raw amino-acid sequence, 149 residues long: Calmodulin (149 aa).

The residue at position 2 (A2) is an N-acetylalanine. EF-hand domains follow at residues 8-43 (EQIA…VGQN), 44-79 (PTEA…KMKD), 81-116 (DSEE…LGEK), and 117-149 (LTDE…MMSK). Ca(2+) contacts are provided by D21, D23, D25, T27, E32, D57, D59, N61, T63, E68, D94, D96, N98, E105, D130, D132, D134, Q136, and E141.

It belongs to the calmodulin family.

Calmodulin mediates the control of a large number of enzymes, ion channels and other proteins by Ca(2+). Among the enzymes to be stimulated by the calmodulin-Ca(2+) complex are a number of protein kinases and phosphatases. This Achlya klebsiana protein is Calmodulin (CMD1).